A 353-amino-acid chain; its full sequence is Photosystem II protein D1 (353 aa).

Helical transmembrane passes span Tyr29–Ile46, His118–Leu133, and Trp142–Ala156. His118 lines the chlorophyll a pocket. Tyr126 serves as a coordination point for pheophytin a. Asp170 and Glu189 together coordinate [CaMn4O5] cluster. A helical membrane pass occupies residues Phe197–Leu218. Residue His198 coordinates chlorophyll a. Residues His215 and Ser264 to Phe265 each bind a quinone. Fe cation is bound at residue His215. Position 272 (His272) interacts with Fe cation. A helical transmembrane segment spans residues Phe274–Leu288. [CaMn4O5] cluster-binding residues include His332, Glu333, Asp342, and Ala344. Residues Ala345–Gly353 constitute a propeptide that is removed on maturation.

It belongs to the reaction center PufL/M/PsbA/D family. As to quaternary structure, PSII is composed of 1 copy each of membrane proteins PsbA, PsbB, PsbC, PsbD, PsbE, PsbF, PsbH, PsbI, PsbJ, PsbK, PsbL, PsbM, PsbT, PsbX, PsbY, PsbZ, Psb30/Ycf12, peripheral proteins PsbO, CyanoQ (PsbQ), PsbU, PsbV and a large number of cofactors. It forms dimeric complexes. The D1/D2 heterodimer binds P680, chlorophylls that are the primary electron donor of PSII, and subsequent electron acceptors. It shares a non-heme iron and each subunit binds pheophytin, quinone, additional chlorophylls, carotenoids and lipids. D1 provides most of the ligands for the Mn4-Ca-O5 cluster of the oxygen-evolving complex (OEC). There is also a Cl(-1) ion associated with D1 and D2, which is required for oxygen evolution. The PSII complex binds additional chlorophylls, carotenoids and specific lipids. serves as cofactor. In terms of processing, tyr-161 forms a radical intermediate that is referred to as redox-active TyrZ, YZ or Y-Z. Post-translationally, C-terminally processed by CtpA; processing is essential to allow assembly of the oxygen-evolving complex and thus photosynthetic growth.

Its subcellular location is the cellular thylakoid membrane. It catalyses the reaction 2 a plastoquinone + 4 hnu + 2 H2O = 2 a plastoquinol + O2. Functionally, photosystem II (PSII) is a light-driven water:plastoquinone oxidoreductase that uses light energy to abstract electrons from H(2)O, generating O(2) and a proton gradient subsequently used for ATP formation. It consists of a core antenna complex that captures photons, and an electron transfer chain that converts photonic excitation into a charge separation. The D1/D2 (PsbA/PsbD) reaction center heterodimer binds P680, the primary electron donor of PSII as well as several subsequent electron acceptors. The polypeptide is Photosystem II protein D1 (Prochlorothrix hollandica).